We begin with the raw amino-acid sequence, 123 residues long: Dormancy-associated protein homolog 4 (123 aa).

The disordered stretch occupies residues 7-86 (LWDETVAGPT…NPGTPLTPGT (80 aa)). Positions 30–46 (LSTVRSSPPSLSSDQVT) are enriched in low complexity. Composition is skewed to polar residues over residues 47–58 (RSIMVTKGNNNV) and 71–80 (PTCSSSNPGT). At S74 the chain carries Phosphoserine.

The protein belongs to the DRM1/ARP family.

The sequence is that of Dormancy-associated protein homolog 4 from Arabidopsis thaliana (Mouse-ear cress).